The chain runs to 523 residues: Leucine-rich repeat transmembrane neuronal protein 1 (523 aa).

Positions 1–34 (MDFLLLGLCLHWLLRRPSGVVLCLLGACFQMLPA) are cleaved as a signal peptide. An LRRNT domain is found at 35–63 (APSGCPGQCRCEGRLLYCEALNLTEAPHN). The Extracellular segment spans residues 35–428 (APSGCPGQCR…HAENAVQIHK (394 aa)). N56 and N63 each carry an N-linked (GlcNAc...) asparagine glycan. 10 LRR repeats span residues 64–87 (LSGL…QFTG), 89–111 (MQLT…AFQK), 112–135 (LRRV…TFRP), 136–159 (MPNL…LFHG), 161–183 (RKLT…IFQD), 184–207 (CRSL…SFAG), 209–231 (FKLT…HFPR), 233–255 (ISLN…LDWV), 256–278 (WNLE…VFET), and 280–302 (PYLQ…ILNS). An N-linked (GlcNAc...) asparagine glycan is attached at N130. In terms of domain architecture, LRRCT spans 314 to 365 (NLWDCGRNVCALASWLSNFQGRYDANLQCASPEYAQGEDVLDAVYAFHLCED). Residue N381 is glycosylated (N-linked (GlcNAc...) asparagine). Residues 429–449 (VVTGTMALIFSFLIVVLVLYV) form a helical membrane-spanning segment. At 450–523 (SWKCFPASLR…HQQPARECEV (74 aa)) the chain is on the cytoplasmic side. A May be involved in DLG4-binding motif is present at residues 520–523 (ECEV).

This sequence belongs to the LRRTM family. Interacts with DLG4.

The protein resides in the cell membrane. It localises to the postsynaptic cell membrane. In terms of biological role, exhibits strong synaptogenic activity, restricted to excitatory presynaptic differentiation, acting at both pre- and postsynaptic level. This Rattus norvegicus (Rat) protein is Leucine-rich repeat transmembrane neuronal protein 1 (Lrrtm1).